Consider the following 321-residue polypeptide: Fe-S cluster assembly protein DRE2 (321 aa).

The tract at residues 1–131 (MERMLLLSPP…KPDFGPENIV (131 aa)) is N-terminal SAM-like domain. The interval 132–213 (PLKLGKRKPV…EETLLDGEDM (82 aa)) is linker. Residues C223, C234, C237, and C239 each coordinate [2Fe-2S] cluster. A fe-S binding site A region spans residues 223–239 (CRPKAGKRRRACKDCTC). [4Fe-4S] cluster-binding residues include C284, C287, C295, and C298. 2 consecutive short sequence motifs (cx2C motif) follow at residues 284 to 287 (CGNC) and 295 to 298 (CDGC). The interval 284–298 (CGNCALGDAFRCDGC) is fe-S binding site B.

The protein belongs to the anamorsin family. In terms of assembly, monomer. Interacts with TAH18. Interacts with MIA40. [2Fe-2S] cluster is required as a cofactor. It depends on [4Fe-4S] cluster as a cofactor.

It localises to the cytoplasm. The protein resides in the mitochondrion intermembrane space. Component of the cytosolic iron-sulfur (Fe-S) protein assembly (CIA) machinery required for the maturation of extramitochondrial Fe-S proteins. Part of an electron transfer chain functioning in an early step of cytosolic Fe-S biogenesis, facilitating the de novo assembly of a [4Fe-4S] cluster on the scaffold complex CFD1-NBP35. Electrons are transferred to DRE2 from NADPH via the FAD- and FMN-containing protein TAH18. TAH18-DRE2 are also required for the assembly of the diferric tyrosyl radical cofactor of ribonucleotide reductase (RNR), probably by providing electrons for reduction during radical cofactor maturation in the catalytic small subunit RNR2. This chain is Fe-S cluster assembly protein DRE2, found in Coccidioides immitis (strain RS) (Valley fever fungus).